Consider the following 268-residue polypeptide: 4-hydroxy-tetrahydrodipicolinate reductase (268 aa).

Residues Gly10 to Met15 and Asp36 each bind NAD(+). Residue Arg37 coordinates NADP(+). NAD(+)-binding positions include Gly99–Thr101 and Ser123–Met126. The Proton donor/acceptor role is filled by His156. Residue His157 participates in (S)-2,3,4,5-tetrahydrodipicolinate binding. Lys160 acts as the Proton donor in catalysis. Gly166–Thr167 provides a ligand contact to (S)-2,3,4,5-tetrahydrodipicolinate.

It belongs to the DapB family.

The protein resides in the cytoplasm. It catalyses the reaction (S)-2,3,4,5-tetrahydrodipicolinate + NAD(+) + H2O = (2S,4S)-4-hydroxy-2,3,4,5-tetrahydrodipicolinate + NADH + H(+). It carries out the reaction (S)-2,3,4,5-tetrahydrodipicolinate + NADP(+) + H2O = (2S,4S)-4-hydroxy-2,3,4,5-tetrahydrodipicolinate + NADPH + H(+). It participates in amino-acid biosynthesis; L-lysine biosynthesis via DAP pathway; (S)-tetrahydrodipicolinate from L-aspartate: step 4/4. Its function is as follows. Catalyzes the conversion of 4-hydroxy-tetrahydrodipicolinate (HTPA) to tetrahydrodipicolinate. The chain is 4-hydroxy-tetrahydrodipicolinate reductase from Burkholderia pseudomallei (strain 1710b).